The following is a 270-amino-acid chain: Gap junction beta-3 protein (270 aa).

The Cytoplasmic segment spans residues 1–20; that stretch reads MDWKTLQALLSGVNKYSTAF. Residues 21–40 traverse the membrane as a helical segment; it reads GRIWLSVVFVFRVLVYVVAA. At 41–75 the chain is on the extracellular side; sequence ERVWGDEQKDFDCNTKQPGCTNVCYDNYFPISNIR. A helical transmembrane segment spans residues 76 to 98; it reads LWALQLIFVTCPSLLVILHVAYR. The Cytoplasmic portion of the chain corresponds to 99 to 126; that stretch reads EERERRHRQKHGDQCAKLYDNAGKKHGG. The helical transmembrane segment at 127 to 149 threads the bilayer; sequence LWWTYLFSLIFKLIIEFLFLYLL. At 150-187 the chain is on the extracellular side; it reads HTLWHGFNMPRLVQCANVAPCPNIVDCYIARPTEKKIF. The helical transmembrane segment at 188 to 210 threads the bilayer; that stretch reads TYFMVGASAVCIVLTICELCYLI. At 211-270 the chain is on the cytoplasmic side; sequence CHRVLRGLHKDKPRGGCSPSSSASRASTCRCHHKLVEAGEVDPDPGNNKLQASAPNLTPI. Residues 250–270 form a disordered region; the sequence is EVDPDPGNNKLQASAPNLTPI. Positions 258–270 are enriched in polar residues; it reads NKLQASAPNLTPI.

Belongs to the connexin family. Beta-type (group I) subfamily. A connexon is composed of a hexamer of connexins. Interacts with CNST.

It localises to the cell membrane. It is found in the cell junction. The protein localises to the gap junction. Functionally, one gap junction consists of a cluster of closely packed pairs of transmembrane channels, the connexons, through which materials of low MW diffuse from one cell to a neighboring cell. The sequence is that of Gap junction beta-3 protein (GJB3) from Homo sapiens (Human).